A 63-amino-acid chain; its full sequence is Large ribosomal subunit protein uL29 (63 aa).

It belongs to the universal ribosomal protein uL29 family.

This chain is Large ribosomal subunit protein uL29, found in Herminiimonas arsenicoxydans.